A 400-amino-acid polypeptide reads, in one-letter code: MWRLIIIAILFQGLVNSAMLERRKRGVDPETAMNISEIILFRGYPSEEYEVVTGDGYILCLNRIPYGKISQKTKEPKPAVFLQHGLLADGSNWVTNLDYNSLGFALADAGFDVWLGNSRGNTWSQKHINYTIKQKEFWMFSFNEMAMYDIPASVNFVLNKTGQEQLFYVGHSQGTTIGFIAFSVLPELAKKIKMFFGLAPVMTVKFSSGGLVKLGELPEFLLKEIFGTKQIFPQNAVIKWLATHVCGQVLIDELCGNFFFLLCGFNEKNLNMSRVEIYSTHCPAGTSVQNMLHWSQAVKSGEVRAFDWGSRKENMAHYKQPTPPPYKMERMLVPTALWTGGHDWLSDRKDIAILLTLIPNLIYHKEIPEWEHLDFIWGLDAPQRMFRDMIQMMHKVQYAH.

A signal peptide spans 1–17 (MWRLIIIAILFQGLVNS). Asparagine 34, asparagine 129, and asparagine 159 each carry an N-linked (GlcNAc...) asparagine glycan. The AB hydrolase-1 domain maps to 78 to 378 (PAVFLQHGLL…EWEHLDFIWG (301 aa)). The active-site Charge relay system is the serine 172. Asparagine 271 carries N-linked (GlcNAc...) asparagine glycosylation. Histidine 372 acts as the Charge relay system in catalysis.

The protein belongs to the AB hydrolase superfamily. Lipase family. As to expression, expressed by the venom gland.

It is found in the secreted. It catalyses the reaction a sterol ester + H2O = a sterol + a fatty acid + H(+). Its function is as follows. In physiological conditions, is crucial for intracellular hydrolysis of cholesteryl esters and triglycerides that have been internalized via receptor-mediated endocytosis of lipoprotein particles. In venom, the biological contribution is unknown. This Crotalus adamanteus (Eastern diamondback rattlesnake) protein is Putative lysosomal acid lipase/cholesteryl ester hydrolase.